We begin with the raw amino-acid sequence, 271 residues long: Dermonecrotic toxin LarSicTox-alphaIB1c (271 aa).

His-3 is an active-site residue. The Mg(2+) site is built by Glu-23 and Asp-25. His-39 acts as the Nucleophile in catalysis. Disulfide bonds link Cys-43–Cys-49 and Cys-45–Cys-188. Asp-83 serves as a coordination point for Mg(2+). Residue Asn-248 is glycosylated (N-linked (GlcNAc...) asparagine).

It belongs to the arthropod phospholipase D family. Class II subfamily. It depends on Mg(2+) as a cofactor. As to expression, expressed by the venom gland.

It is found in the secreted. The enzyme catalyses an N-(acyl)-sphingosylphosphocholine = an N-(acyl)-sphingosyl-1,3-cyclic phosphate + choline. The catalysed reaction is an N-(acyl)-sphingosylphosphoethanolamine = an N-(acyl)-sphingosyl-1,3-cyclic phosphate + ethanolamine. It catalyses the reaction a 1-acyl-sn-glycero-3-phosphocholine = a 1-acyl-sn-glycero-2,3-cyclic phosphate + choline. It carries out the reaction a 1-acyl-sn-glycero-3-phosphoethanolamine = a 1-acyl-sn-glycero-2,3-cyclic phosphate + ethanolamine. Its function is as follows. Dermonecrotic toxins cleave the phosphodiester linkage between the phosphate and headgroup of certain phospholipids (sphingolipid and lysolipid substrates), forming an alcohol (often choline) and a cyclic phosphate. This toxin acts on sphingomyelin (SM). It may also act on ceramide phosphoethanolamine (CPE), lysophosphatidylcholine (LPC) and lysophosphatidylethanolamine (LPE), but not on lysophosphatidylserine (LPS), and lysophosphatidylglycerol (LPG). It acts by transphosphatidylation, releasing exclusively cyclic phosphate products as second products. Induces dermonecrosis, hemolysis, increased vascular permeability, edema, inflammatory response, and platelet aggregation. This Loxosceles arizonica (Arizona brown spider) protein is Dermonecrotic toxin LarSicTox-alphaIB1c.